We begin with the raw amino-acid sequence, 197 residues long: RNA pyrophosphohydrolase (197 aa).

In terms of domain architecture, Nudix hydrolase spans 6-149 (GYRPNVGIVI…KRDVYRRAMK (144 aa)). The Nudix box motif lies at 38-59 (GGINEGETPEQAMFRELFEEVG). The interval 170–197 (ETKKAETGKKQPYYHKYAPQNKKGRKRR) is disordered.

Belongs to the Nudix hydrolase family. RppH subfamily. A divalent metal cation is required as a cofactor.

Functionally, accelerates the degradation of transcripts by removing pyrophosphate from the 5'-end of triphosphorylated RNA, leading to a more labile monophosphorylated state that can stimulate subsequent ribonuclease cleavage. This Actinobacillus succinogenes (strain ATCC 55618 / DSM 22257 / CCUG 43843 / 130Z) protein is RNA pyrophosphohydrolase.